The chain runs to 207 residues: Hemin/hemoglobin-binding protein 1 (207 aa).

An N-terminal signal peptide occupies residues 1-27; sequence MKKVLVFAAFIVLFSFSFLSTGLTAQA. In terms of domain architecture, NEAT spans 29–148; that stretch reads LKDGTYSVDY…RFDEGSAKAL (120 aa). The segment at 151-178 is disordered; sequence AVKSSDNNTTTPATKSDSSNKVTNPKSS. Residues 154–178 are compositionally biased toward polar residues; that stretch reads SSDNNTTTPATKSDSSNKVTNPKSS. The NPKXZ sorting signal motif lies at 174–178; it reads NPKSS. Ser-177 bears the Murein peptidoglycan amidated serine mark. Residues 178–207 constitute a propeptide, removed by sortase B; the sequence is SDSSQMFLYGIIFVATGAGLILLKRRAIFK.

It is found in the secreted. The protein localises to the cell wall. In terms of biological role, binds both host hemin and hemoglobin with affinity in the nanomolar range and presumably directs it to membrane transporters. The polypeptide is Hemin/hemoglobin-binding protein 1 (Listeria monocytogenes serovar 1/2a (strain ATCC BAA-679 / EGD-e)).